A 692-amino-acid chain; its full sequence is Elongation factor G (692 aa).

The region spanning 8–282 is the tr-type G domain; sequence AKTRNIGIMA…AVIAYLPSPL (275 aa). GTP is bound by residues 17–24, 81–85, and 135–138; these read AHVDAGKT, DTPGH, and NKMD.

It belongs to the TRAFAC class translation factor GTPase superfamily. Classic translation factor GTPase family. EF-G/EF-2 subfamily.

The protein localises to the cytoplasm. Catalyzes the GTP-dependent ribosomal translocation step during translation elongation. During this step, the ribosome changes from the pre-translocational (PRE) to the post-translocational (POST) state as the newly formed A-site-bound peptidyl-tRNA and P-site-bound deacylated tRNA move to the P and E sites, respectively. Catalyzes the coordinated movement of the two tRNA molecules, the mRNA and conformational changes in the ribosome. This Streptococcus equi subsp. equi (strain 4047) protein is Elongation factor G.